Here is a 1064-residue protein sequence, read N- to C-terminus: Rab GTPase-activating protein 1 (1064 aa).

The tract at residues Met-1–Ile-101 is disordered. Over residues Val-7–Ser-22 the composition is skewed to low complexity. Ser-42 carries the phosphoserine modification. Residues Leu-91–Ile-101 are compositionally biased toward polar residues. Residues Glu-137–Ile-293 enclose the PID domain. Phosphoserine is present on Ser-355. The disordered stretch occupies residues Arg-478–Gly-520. Residues Thr-484–Ile-501 show a composition bias toward polar residues. Acidic residues predominate over residues Pro-505 to Glu-515. One can recognise a Rab-GAP TBC domain in the interval Gly-561–Gly-747. A coiled-coil region spans residues Ser-805–Gln-1038. A Phosphothreonine modification is found at Thr-991.

As to quaternary structure, interacts with RAB6A and tubulin gamma.

The protein localises to the cytoplasm. It is found in the cytosol. It localises to the cytoskeleton. The protein resides in the microtubule organizing center. Its subcellular location is the centrosome. Functionally, may act as a GTPase-activating protein of RAB6A. May play a role in microtubule nucleation by centrosome. May participate in a RAB6A-mediated pathway involved in the metaphase-anaphase transition. The protein is Rab GTPase-activating protein 1 of Mus musculus (Mouse).